Here is a 317-residue protein sequence, read N- to C-terminus: Uridine phosphorylase 2 (317 aa).

Residues Gly66, Arg100, and Arg144–Thr147 contribute to the phosphate site. A disulfide bridge links Cys95 with Cys102. Uridine is bound by residues Ser148–Gly149 and Gln223–Arg225.

The protein belongs to the PNP/UDP phosphorylase family. As to quaternary structure, homodimer. As to expression, predominantly expressed in kidney.

The enzyme catalyses uridine + phosphate = alpha-D-ribose 1-phosphate + uracil. It catalyses the reaction 2'-deoxyuridine + phosphate = 2-deoxy-alpha-D-ribose 1-phosphate + uracil. It functions in the pathway pyrimidine metabolism; UMP biosynthesis via salvage pathway; uracil from uridine (phosphorylase route): step 1/1. Its activity is regulated as follows. A conditional disulfide bridge can form within the protein that dislocates a critical phosphate-coordinating arginine Arg-100 away from the active site, disabling the enzyme. In terms of biological role, catalyzes the reversible phosphorylytic cleavage of uridine to uracil and ribose-1-phosphate which can then be utilized as carbon and energy sources or in the rescue of pyrimidine bases for nucleotide synthesis. Shows broad substrate specificity and can also accept deoxyuridine and other analogous compounds. This Homo sapiens (Human) protein is Uridine phosphorylase 2.